The sequence spans 442 residues: Proline--tRNA ligase (442 aa).

This sequence belongs to the class-II aminoacyl-tRNA synthetase family. ProS type 2 subfamily. Homodimer.

The protein resides in the cytoplasm. It catalyses the reaction tRNA(Pro) + L-proline + ATP = L-prolyl-tRNA(Pro) + AMP + diphosphate. Catalyzes the attachment of proline to tRNA(Pro) in a two-step reaction: proline is first activated by ATP to form Pro-AMP and then transferred to the acceptor end of tRNA(Pro). The protein is Proline--tRNA ligase of Brucella canis (strain ATCC 23365 / NCTC 10854 / RM-666).